We begin with the raw amino-acid sequence, 75 residues long: MARVCQVTGKRPMSGNKRSHAMNATKRWFAPNIHSHRFWVASKKRFVALRLSTKGIRLIDKFGIEYFFTKIYPKK.

The interval 1 to 21 (MARVCQVTGKRPMSGNKRSHA) is disordered.

Belongs to the bacterial ribosomal protein bL28 family.

The polypeptide is Large ribosomal subunit protein bL28 (Blochmanniella pennsylvanica (strain BPEN)).